Consider the following 164-residue polypeptide: Large ribosomal subunit protein uL23 (164 aa).

A disordered region spans residues 1-41 (MPAKAASAAASKKNSAPKSAVSKKVAKKGAPAAAAKPTKVV).

This sequence belongs to the universal ribosomal protein uL23 family.

In terms of biological role, this protein binds to a specific region on the 26S rRNA. This Trypanosoma brucei brucei protein is Large ribosomal subunit protein uL23 (RPL23A).